The primary structure comprises 345 residues: tRNA pseudouridine synthase B (345 aa).

Residue Asp-39 is the Nucleophile of the active site.

This sequence belongs to the pseudouridine synthase TruB family. Type 1 subfamily.

The enzyme catalyses uridine(55) in tRNA = pseudouridine(55) in tRNA. In terms of biological role, responsible for synthesis of pseudouridine from uracil-55 in the psi GC loop of transfer RNAs. The chain is tRNA pseudouridine synthase B from Rickettsia peacockii (strain Rustic).